Consider the following 475-residue polypeptide: Transcription factor EB (475 aa).

Residues 1–52 (MASRIGLRMQLMREQAQQEEQRERMQQQAVMHYMQQQQQQQQQLGGPPTPAI) form a disordered region. Positions 1–166 (MASRIGLRMQ…DDVIDNIMRL (166 aa)) are interaction with ACSS2. Over residues 26-43 (QQQAVMHYMQQQQQQQQQ) the composition is skewed to low complexity. Phosphoserine occurs at positions 108, 113, 121, and 137. The Nuclear export signal signature appears at 135–152 (GNSAPNSPMAMLHISSNP). Ser141 carries the phosphoserine; by MTOR modification. Residues 155–164 (EFDDVIDNIM) form a strong transcription activation domain region. Thr182 carries the post-translational modification Phosphothreonine. Residue Ser210 is modified to Phosphoserine; by MTOR. Cys211 carries the S-(2,3-dicarboxypropyl)cysteine modification. The 54-residue stretch at 234 to 287 (QKKDNHNLIERRRRFNINDRIKELGMLIPKANDLDVRWNKGTILKASVDYIRRM) folds into the bHLH domain. The short motif at 244–247 (RRRR) is the Nuclear localization signal element. Residues 297–318 (LENHSRRLEMTNKQLWLRIQEL) form a leucine-zipper region. The residue at position 331 (Ser331) is a Phosphoserine. The segment at 351–429 (SEDGPGEALM…HGSPFPNLSK (79 aa)) is disordered. A compositionally biased stretch (low complexity) spans 380–389 (LPSAAQPQSP). 5 positions are modified to phosphoserine: Ser422, Ser440, Ser465, Ser466, and Ser468. Positions 445–468 (ASDPLFSTMSPEASKASSRRSSFS) are enriched in low complexity. Positions 445 to 475 (ASDPLFSTMSPEASKASSRRSSFSMEEGDVL) are disordered.

Belongs to the MiT/TFE family. Homodimer and heterodimer; with TFE3 or MITF. Interacts (when phosphorylated by MTOR) with YWHAZ; promoting retention in the cytosol. Interacts with Irgm1; promoting association between TFEB and PPP3CB and dephosphorylation. Interacts with small GTPases Rag (RagA/RRAGA, RagB/RRAGB, RagC/RRAGC and/or RagD/RRAGD); promoting its recruitment to lysosomal membrane in the presence of nutrients. Interacts with ACSS2. Phosphorylation at Ser-210 by MTOR via non-canonical mTORC1 pathway regulates its subcellular location and activity. When nutrients are present, phosphorylation by MTOR promotes association with 14-3-3/YWHA adapters and retention in the cytosol. Inhibition of mTORC1, starvation and lysosomal disruption, promotes dephosphorylation by calcineurin PPP3CB and translocation to the nucleus. Dephosphorylated by calcineurin PPP3CB in response to lysosomal Ca(2+) release. Irgm1 promotes dephosphorylation by calcineurin PPP3CB, resulting in TFEB nuclear translocation and stimulation of lysosomal biogenesis. Exported from the nucleus in a mTORC1-dependent manner in response to nutrient availability. In terms of processing, alkylated via a non-enzymatic covalent modification. Itaconate, an anti-inflammatory metabolite generated in response to lipopolysaccharide, alkylates Cys-211, preventing association with 14-3-3/YWHA adapters, thereby promoting nuclear translocation and activity. Post-translationally, sumoylated; does not affect dimerization with MITF. As to expression, widely expressed.

The protein resides in the nucleus. The protein localises to the cytoplasm. It localises to the cytosol. Its subcellular location is the lysosome membrane. Transcription factor that acts as a master regulator of lysosomal biogenesis, autophagy, lysosomal exocytosis, lipid catabolism, energy metabolism and immune response. Specifically recognizes and binds E-box sequences (5'-CANNTG-3'); efficient DNA-binding requires dimerization with itself or with another MiT/TFE family member such as TFE3 or MITF. Involved in the cellular response to amino acid availability by acting downstream of MTOR: in the presence of nutrients, TFEB phosphorylation by MTOR promotes its cytosolic retention and subsequent inactivation. Upon starvation or lysosomal stress, inhibition of MTOR induces TFEB dephosphorylation, resulting in nuclear localization and transcription factor activity. Specifically recognizes and binds the CLEAR-box sequence (5'-GTCACGTGAC-3') present in the regulatory region of many lysosomal genes, leading to activate their expression, thereby playing a central role in expression of lysosomal genes. Regulates lysosomal positioning in response to nutrient deprivation by promoting the expression of PIP4P1. Acts as a positive regulator of autophagy by promoting expression of genes involved in autophagy. In association with TFE3, activates the expression of CD40L in T-cells, thereby playing a role in T-cell-dependent antibody responses in activated CD4(+) T-cells and thymus-dependent humoral immunity. Specifically recognizes the gamma-E3 box, a subset of E-boxes, present in the heavy-chain immunoglobulin enhancer. Plays a role in the signal transduction processes required for normal vascularization of the placenta. Involved in the immune response to infection by the bacteria S.aureus, S.typhimurium or S.enterica. Infection promotes itaconate production, leading to alkylation, resulting in nuclear localization and transcription factor activity. Itaconate-mediated alkylation activates TFEB-dependent lysosomal biogenesis, facilitating the bacteria clearance during the antibacterial innate immune response. In association with ACSS2, promotes the expression of genes involved in lysosome biogenesis and both autophagy upon glucose deprivation. This is Transcription factor EB from Mus musculus (Mouse).